The following is a 778-amino-acid chain: Protein translocase subunit SecA 2 (778 aa).

Residues Q94, 112-116, and D501 each bind ATP; that span reads GEGKT.

The protein belongs to the SecA family. Monomer and homodimer. Part of the essential Sec protein translocation apparatus which comprises SecA, SecYEG and auxiliary proteins SecDF. Other proteins may also be involved.

The protein resides in the cell membrane. It localises to the cytoplasm. It carries out the reaction ATP + H2O + cellular proteinSide 1 = ADP + phosphate + cellular proteinSide 2.. Functionally, part of the Sec protein translocase complex. Interacts with the SecYEG preprotein conducting channel. Has a central role in coupling the hydrolysis of ATP to the transfer of proteins into and across the cell membrane, serving as an ATP-driven molecular motor driving the stepwise translocation of polypeptide chains across the membrane. In Mycobacterium leprae (strain TN), this protein is Protein translocase subunit SecA 2.